Consider the following 353-residue polypeptide: Feruloyl esterase B (353 aa).

An N-terminal signal peptide occupies residues 1-18; that stretch reads MAIPLVLVLAWLLPVVLA. The catalytic stretch occupies residues 19–291; the sequence is ASLTQVNNFG…VSVVLDWFGI (273 aa). The active-site Charge relay system is serine 136. 2 N-linked (GlcNAc...) asparagine glycosylation sites follow: asparagine 179 and asparagine 246. One can recognise a CBM1 domain in the interval 317 to 353; the sequence is CTAAHWAQCGGIGYSGCTACASPYTCQKANDYYSQCL.

The protein belongs to the carbohydrate esterase 1 (CE1) family. Feruloyl esterase type B subfamily. Glycosylated.

Its subcellular location is the secreted. The catalysed reaction is feruloyl-polysaccharide + H2O = ferulate + polysaccharide.. Inhibited by the specific serine esterase inhibitor AEBSF. In terms of biological role, involved in degradation of plant cell walls. Hydrolyzes the feruloyl-arabinose ester bond in arabinoxylans, and the feruloyl-galactose and feruloyl-arabinose ester bonds in pectin. Binds strongly to cellulose. The sequence is that of Feruloyl esterase B (FAEB) from Talaromyces funiculosus (Fruitlet core rot fungus).